A 351-amino-acid polypeptide reads, in one-letter code: MNPPKSAPDAQGLSYRDAGVDIDAGDALVDKIKPFAKKTLRDGVLGGIGGFGALFEVPKKYREPVLVSGTDGVGTKLKLAFHLNKHDTVGQDLVAMSVNDILVQGAEPLFFLDYFACGKLDVETAATVVKGIATGCELAGCALIGGETAEMPGMYPDGEYDLAGFAVGAVEKSKIIDGSTIAEGDVVLGLASSGIHSNGFSLVRKIIERANPDLSADFHGRSLADALMAPTRIYVKPLLALMEKIAVKGMAHITGGGLVENIPRVLRDGLTAELDQHAWPLPPLFQWLRQHGGVADAEMHRVFNCGIGMAVIVSAADADDALRQLADAGEQVWKIGTVRASREGEAQTVVV.

The protein belongs to the AIR synthase family.

The protein localises to the cytoplasm. The enzyme catalyses 2-formamido-N(1)-(5-O-phospho-beta-D-ribosyl)acetamidine + ATP = 5-amino-1-(5-phospho-beta-D-ribosyl)imidazole + ADP + phosphate + H(+). It participates in purine metabolism; IMP biosynthesis via de novo pathway; 5-amino-1-(5-phospho-D-ribosyl)imidazole from N(2)-formyl-N(1)-(5-phospho-D-ribosyl)glycinamide: step 2/2. The polypeptide is Phosphoribosylformylglycinamidine cyclo-ligase (Burkholderia pseudomallei (strain 1710b)).